Reading from the N-terminus, the 185-residue chain is Translation initiation factor IF-3 (185 aa).

This sequence belongs to the IF-3 family. As to quaternary structure, monomer.

It is found in the cytoplasm. Functionally, IF-3 binds to the 30S ribosomal subunit and shifts the equilibrium between 70S ribosomes and their 50S and 30S subunits in favor of the free subunits, thus enhancing the availability of 30S subunits on which protein synthesis initiation begins. This chain is Translation initiation factor IF-3, found in Coxiella burnetii (strain RSA 493 / Nine Mile phase I).